Here is a 205-residue protein sequence, read N- to C-terminus: Thiamine-phosphate synthase (205 aa).

4-amino-2-methyl-5-(diphosphooxymethyl)pyrimidine is bound by residues 36–40 (QYRRK) and Asp68. Residues Asp69 and Asp88 each coordinate Mg(2+). Position 106 (Ser106) interacts with 4-amino-2-methyl-5-(diphosphooxymethyl)pyrimidine. Residue 132–134 (SPT) participates in 2-[(2R,5Z)-2-carboxy-4-methylthiazol-5(2H)-ylidene]ethyl phosphate binding. Lys135 serves as a coordination point for 4-amino-2-methyl-5-(diphosphooxymethyl)pyrimidine. 2-[(2R,5Z)-2-carboxy-4-methylthiazol-5(2H)-ylidene]ethyl phosphate is bound by residues Gly162 and 182–183 (IS).

Belongs to the thiamine-phosphate synthase family. Mg(2+) is required as a cofactor.

The enzyme catalyses 2-[(2R,5Z)-2-carboxy-4-methylthiazol-5(2H)-ylidene]ethyl phosphate + 4-amino-2-methyl-5-(diphosphooxymethyl)pyrimidine + 2 H(+) = thiamine phosphate + CO2 + diphosphate. It catalyses the reaction 2-(2-carboxy-4-methylthiazol-5-yl)ethyl phosphate + 4-amino-2-methyl-5-(diphosphooxymethyl)pyrimidine + 2 H(+) = thiamine phosphate + CO2 + diphosphate. The catalysed reaction is 4-methyl-5-(2-phosphooxyethyl)-thiazole + 4-amino-2-methyl-5-(diphosphooxymethyl)pyrimidine + H(+) = thiamine phosphate + diphosphate. It functions in the pathway cofactor biosynthesis; thiamine diphosphate biosynthesis; thiamine phosphate from 4-amino-2-methyl-5-diphosphomethylpyrimidine and 4-methyl-5-(2-phosphoethyl)-thiazole: step 1/1. In terms of biological role, condenses 4-methyl-5-(beta-hydroxyethyl)thiazole monophosphate (THZ-P) and 2-methyl-4-amino-5-hydroxymethyl pyrimidine pyrophosphate (HMP-PP) to form thiamine monophosphate (TMP). In Caldivirga maquilingensis (strain ATCC 700844 / DSM 13496 / JCM 10307 / IC-167), this protein is Thiamine-phosphate synthase.